The primary structure comprises 276 residues: Methylesterase 17 (276 aa).

The AB hydrolase-1 domain occupies 19–138 (PHFVLIHGMS…TDEDMKDGVP (120 aa)). The active-site Acyl-ester intermediate is S95. Catalysis depends on charge relay system residues D225 and H252.

Belongs to the AB hydrolase superfamily. Methylesterase family. In terms of tissue distribution, expressed in several tissues of seedlings and adult plants, with a higher relative level of expression in the seedling shoot apex and the adult stem.

It catalyses the reaction methyl (indol-3-yl)acetate + H2O = (indol-3-yl)acetate + methanol + H(+). It participates in plant hormone biosynthesis. In terms of biological role, methylesterase that efficiently and specifically hydrolyzes methyl indole-3-acetic acid (MeIAA) to IAA (auxin). MeIAA is believed to be an inactive form of auxin that needs to be demethylated to exert a biological effect. This chain is Methylesterase 17, found in Arabidopsis thaliana (Mouse-ear cress).